Reading from the N-terminus, the 177-residue chain is Bifunctional protein PyrR (177 aa).

The short motif at Val-99–Thr-111 is the PRPP-binding element.

This sequence belongs to the purine/pyrimidine phosphoribosyltransferase family. PyrR subfamily.

It catalyses the reaction UMP + diphosphate = 5-phospho-alpha-D-ribose 1-diphosphate + uracil. Functionally, regulates the transcription of the pyrimidine nucleotide (pyr) operon in response to exogenous pyrimidines. Also displays a weak uracil phosphoribosyltransferase activity which is not physiologically significant. The sequence is that of Bifunctional protein PyrR from Microcystis aeruginosa (strain NIES-843 / IAM M-2473).